We begin with the raw amino-acid sequence, 21 residues long: Major outer membrane protein P44 (21 aa).

Monomer.

It localises to the cell outer membrane. The sequence is that of Major outer membrane protein P44 from Mannheimia haemolytica (Pasteurella haemolytica).